Here is a 104-residue protein sequence, read N- to C-terminus: Large ribosomal subunit protein uL24 (104 aa).

Belongs to the universal ribosomal protein uL24 family. In terms of assembly, part of the 50S ribosomal subunit.

In terms of biological role, one of two assembly initiator proteins, it binds directly to the 5'-end of the 23S rRNA, where it nucleates assembly of the 50S subunit. Functionally, one of the proteins that surrounds the polypeptide exit tunnel on the outside of the subunit. This Bradyrhizobium diazoefficiens (strain JCM 10833 / BCRC 13528 / IAM 13628 / NBRC 14792 / USDA 110) protein is Large ribosomal subunit protein uL24.